A 63-amino-acid polypeptide reads, in one-letter code: Large ribosomal subunit protein bL35 (63 aa).

The protein belongs to the bacterial ribosomal protein bL35 family.

The polypeptide is Large ribosomal subunit protein bL35 (Campylobacter curvus (strain 525.92)).